We begin with the raw amino-acid sequence, 428 residues long: Histidine--tRNA ligase (428 aa).

It belongs to the class-II aminoacyl-tRNA synthetase family. Homodimer.

It localises to the cytoplasm. It catalyses the reaction tRNA(His) + L-histidine + ATP = L-histidyl-tRNA(His) + AMP + diphosphate + H(+). This is Histidine--tRNA ligase from Azotobacter vinelandii (strain DJ / ATCC BAA-1303).